Here is a 604-residue protein sequence, read N- to C-terminus: Cell division cycle protein CDT1 (604 aa).

The protein belongs to the Cdt1 family. As to quaternary structure, associates with the MCM2-7 complex. Interacts with MCM2, ORC1, ORC2 and ORC6.

The protein localises to the cytoplasm. Its subcellular location is the nucleus. DNA replication licensing factor, required for pre-replication complex assembly. Faithful duplication of the genetic material requires 'once per cell cycle' DNA replication initiation and elongation. Central to this control is the tightly regulated formation of prereplicative complexes (preRCs) at future origins of DNA replication. Required for the recruitment of the MCM2-7 helicase complex to the replication origins. The polypeptide is Cell division cycle protein CDT1 (TAH11) (Saccharomyces cerevisiae (strain ATCC 204508 / S288c) (Baker's yeast)).